Consider the following 358-residue polypeptide: Uptake hydrogenase small subunit (358 aa).

The N-terminal stretch at 1-45 (MSDIETFYDVMRRQGITRRSFMKSVRSPQHVLGLGPSFVPKIGEA) is a signal peptide. [4Fe-4S] cluster is bound by residues Cys-62, Cys-65, Cys-160, Cys-194, His-232, Cys-235, Cys-260, and Cys-266. [3Fe-4S] cluster-binding residues include Cys-275, Cys-294, and Cys-297.

The protein belongs to the [NiFe]/[NiFeSe] hydrogenase small subunit family. In terms of assembly, heterodimer of a large and a small subunit. [4Fe-4S] cluster serves as cofactor. The cofactor is [3Fe-4S] cluster.

It is found in the cell membrane. It carries out the reaction H2 + A = AH2. Functionally, this enzyme recycles the H(2) produced by nitrogenase to increase the production of ATP and to protect nitrogenase against inhibition or damage by O(2) under carbon- or phosphate-limited conditions. The polypeptide is Uptake hydrogenase small subunit (hupA) (Rhodobacter capsulatus (Rhodopseudomonas capsulata)).